The chain runs to 262 residues: Ribosomal RNA small subunit methyltransferase A (262 aa).

S-adenosyl-L-methionine-binding residues include H13, L15, G40, E61, D85, and N103.

It belongs to the class I-like SAM-binding methyltransferase superfamily. rRNA adenine N(6)-methyltransferase family. RsmA subfamily.

The protein localises to the cytoplasm. The enzyme catalyses adenosine(1518)/adenosine(1519) in 16S rRNA + 4 S-adenosyl-L-methionine = N(6)-dimethyladenosine(1518)/N(6)-dimethyladenosine(1519) in 16S rRNA + 4 S-adenosyl-L-homocysteine + 4 H(+). Functionally, specifically dimethylates two adjacent adenosines (A1518 and A1519) in the loop of a conserved hairpin near the 3'-end of 16S rRNA in the 30S particle. May play a critical role in biogenesis of 30S subunits. The sequence is that of Ribosomal RNA small subunit methyltransferase A from Bordetella petrii (strain ATCC BAA-461 / DSM 12804 / CCUG 43448).